The primary structure comprises 237 residues: RING-H2 finger protein ATL57 (237 aa).

A helical transmembrane segment spans residues 51–71 (ALTIFILLVALFFMGFFSVYF). An RING-type; atypical zinc finger spans residues 140–182 (CVICLSDFEEGETVKVIPHCGHVFHVDCVDTWLSSYVTCPLCR).

The protein belongs to the RING-type zinc finger family. ATL subfamily.

The protein resides in the membrane. The catalysed reaction is S-ubiquitinyl-[E2 ubiquitin-conjugating enzyme]-L-cysteine + [acceptor protein]-L-lysine = [E2 ubiquitin-conjugating enzyme]-L-cysteine + N(6)-ubiquitinyl-[acceptor protein]-L-lysine.. It functions in the pathway protein modification; protein ubiquitination. The chain is RING-H2 finger protein ATL57 (ATL57) from Arabidopsis thaliana (Mouse-ear cress).